The following is a 574-amino-acid chain: Proline--tRNA ligase (574 aa).

Belongs to the class-II aminoacyl-tRNA synthetase family. ProS type 1 subfamily. Homodimer.

It localises to the cytoplasm. It catalyses the reaction tRNA(Pro) + L-proline + ATP = L-prolyl-tRNA(Pro) + AMP + diphosphate. In terms of biological role, catalyzes the attachment of proline to tRNA(Pro) in a two-step reaction: proline is first activated by ATP to form Pro-AMP and then transferred to the acceptor end of tRNA(Pro). As ProRS can inadvertently accommodate and process non-cognate amino acids such as alanine and cysteine, to avoid such errors it has two additional distinct editing activities against alanine. One activity is designated as 'pretransfer' editing and involves the tRNA(Pro)-independent hydrolysis of activated Ala-AMP. The other activity is designated 'posttransfer' editing and involves deacylation of mischarged Ala-tRNA(Pro). The misacylated Cys-tRNA(Pro) is not edited by ProRS. In Desulfovibrio desulfuricans (strain ATCC 27774 / DSM 6949 / MB), this protein is Proline--tRNA ligase.